A 351-amino-acid chain; its full sequence is Uroporphyrinogen decarboxylase (351 aa).

Substrate contacts are provided by residues 32–36 (RQAGR), Phe51, Asp82, Tyr157, Ser211, and His326.

The protein belongs to the uroporphyrinogen decarboxylase family. In terms of assembly, homodimer.

It localises to the cytoplasm. It carries out the reaction uroporphyrinogen III + 4 H(+) = coproporphyrinogen III + 4 CO2. It functions in the pathway porphyrin-containing compound metabolism; protoporphyrin-IX biosynthesis; coproporphyrinogen-III from 5-aminolevulinate: step 4/4. Functionally, catalyzes the decarboxylation of four acetate groups of uroporphyrinogen III to yield coproporphyrinogen III. The protein is Uroporphyrinogen decarboxylase of Caulobacter vibrioides (strain ATCC 19089 / CIP 103742 / CB 15) (Caulobacter crescentus).